The sequence spans 283 residues: Protein/nucleic acid deglycase HchA (283 aa).

Residues H86, E91, and H123 each coordinate Zn(2+). C185 functions as the Nucleophile in the catalytic mechanism.

It belongs to the peptidase C56 family. HchA subfamily. In terms of assembly, homodimer.

Its subcellular location is the cytoplasm. It carries out the reaction N(omega)-(1-hydroxy-2-oxopropyl)-L-arginyl-[protein] + H2O = lactate + L-arginyl-[protein] + H(+). The enzyme catalyses N(6)-(1-hydroxy-2-oxopropyl)-L-lysyl-[protein] + H2O = lactate + L-lysyl-[protein] + H(+). The catalysed reaction is S-(1-hydroxy-2-oxopropyl)-L-cysteinyl-[protein] + H2O = lactate + L-cysteinyl-[protein] + H(+). It catalyses the reaction N(omega)-(1-hydroxy-2-oxoethyl)-L-arginyl-[protein] + H2O = L-arginyl-[protein] + glycolate + H(+). It carries out the reaction N(6)-(1-hydroxy-2-oxoethyl)-L-lysyl-[protein] + H2O = glycolate + L-lysyl-[protein] + H(+). The enzyme catalyses S-(1-hydroxy-2-oxoethyl)-L-cysteinyl-[protein] + H2O = glycolate + L-cysteinyl-[protein] + H(+). The catalysed reaction is N(2)-(1-hydroxy-2-oxopropyl)-dGTP + H2O = lactate + dGTP + H(+). It catalyses the reaction N(2)-(1-hydroxy-2-oxopropyl)-GTP + H2O = lactate + GTP + H(+). It carries out the reaction N(2)-(1-hydroxy-2-oxopropyl)-GDP + H2O = lactate + GDP + H(+). The enzyme catalyses N(2)-(1-hydroxy-2-oxopropyl)-GMP + H2O = lactate + GMP + H(+). The catalysed reaction is N(2)-(1-hydroxy-2-oxoethyl)-dGTP + H2O = dGTP + glycolate + H(+). It catalyses the reaction N(2)-(1-hydroxy-2-oxoethyl)-GTP + H2O = glycolate + GTP + H(+). It carries out the reaction N(2)-(1-hydroxy-2-oxoethyl)-GDP + H2O = glycolate + GDP + H(+). The enzyme catalyses N(2)-(1-hydroxy-2-oxoethyl)-GMP + H2O = glycolate + GMP + H(+). The catalysed reaction is an N(2)-(1-hydroxy-2-oxopropyl)-guanosine in RNA + H2O = a guanosine in RNA + lactate + H(+). It catalyses the reaction an N(2)-(1-hydroxy-2-oxopropyl)-2'-deoxyguanosine in DNA + H2O = a 2'-deoxyguanosine in DNA + lactate + H(+). It carries out the reaction an N(2)-(1-hydroxy-2-oxoethyl)-guanosine in RNA + H2O = a guanosine in RNA + glycolate + H(+). The enzyme catalyses an N(2)-(1-hydroxy-2-oxoethyl)-2'-deoxyguanosine in DNA + H2O = a 2'-deoxyguanosine in DNA + glycolate + H(+). Functionally, protein and nucleotide deglycase that catalyzes the deglycation of the Maillard adducts formed between amino groups of proteins or nucleotides and reactive carbonyl groups of glyoxals. Thus, functions as a protein deglycase that repairs methylglyoxal- and glyoxal-glycated proteins, and releases repaired proteins and lactate or glycolate, respectively. Deglycates cysteine, arginine and lysine residues in proteins, and thus reactivates these proteins by reversing glycation by glyoxals. Acts on early glycation intermediates (hemithioacetals and aminocarbinols), preventing the formation of Schiff bases and advanced glycation endproducts (AGE). Also functions as a nucleotide deglycase able to repair glycated guanine in the free nucleotide pool (GTP, GDP, GMP, dGTP) and in DNA and RNA. Is thus involved in a major nucleotide repair system named guanine glycation repair (GG repair), dedicated to reversing methylglyoxal and glyoxal damage via nucleotide sanitization and direct nucleic acid repair. Plays an important role in protecting cells from carbonyl stress. This is Protein/nucleic acid deglycase HchA from Shigella sonnei (strain Ss046).